An 80-amino-acid polypeptide reads, in one-letter code: Tripartite terminase subunit 2 (80 aa).

Belongs to the herpesviridae TRM2 protein family. Associates with TRM1 and TRM3 to form the tripartite terminase complex.

The protein resides in the host nucleus. In terms of biological role, component of the molecular motor that translocates viral genomic DNA in empty capsid during DNA packaging. Forms a tripartite terminase complex together with TRM1 and TRM3 in the host cytoplasm. Once the complex reaches the host nucleus, it interacts with the capsid portal vertex. This portal forms a ring in which genomic DNA is translocated into the capsid. The polypeptide is Tripartite terminase subunit 2 (Homo sapiens (Human)).